The primary structure comprises 328 residues: Phosphatidylglycerol--prolipoprotein diacylglyceryl transferase (328 aa).

Transmembrane regions (helical) follow at residues 15 to 35 (VIQG…ILIS), 57 to 77 (IFMF…STLV), and 106 to 126 (GMAI…TINT). Position 156 (Arg-156) interacts with a 1,2-diacyl-sn-glycero-3-phospho-(1'-sn-glycerol). 2 consecutive transmembrane segments (helical) span residues 242 to 262 (GFIF…IEYL) and 289 to 309 (ISMG…WIIV).

The protein belongs to the Lgt family.

It localises to the cell inner membrane. The catalysed reaction is L-cysteinyl-[prolipoprotein] + a 1,2-diacyl-sn-glycero-3-phospho-(1'-sn-glycerol) = an S-1,2-diacyl-sn-glyceryl-L-cysteinyl-[prolipoprotein] + sn-glycerol 1-phosphate + H(+). It participates in protein modification; lipoprotein biosynthesis (diacylglyceryl transfer). Catalyzes the transfer of the diacylglyceryl group from phosphatidylglycerol to the sulfhydryl group of the N-terminal cysteine of a prolipoprotein, the first step in the formation of mature lipoproteins. In Borreliella burgdorferi (strain ATCC 35210 / DSM 4680 / CIP 102532 / B31) (Borrelia burgdorferi), this protein is Phosphatidylglycerol--prolipoprotein diacylglyceryl transferase.